The primary structure comprises 377 residues: Malate dehydrogenase, cytoplasmic (377 aa).

Positions 2-5 match the Pro/N-degron motif; that stretch reads PHSV. Phosphothreonine is present on threonine 6. Residues 20 to 26 and aspartate 57 contribute to the NAD(+) site; that span reads GAAGGIG. Residues arginine 106 and arginine 112 each coordinate substrate. Residues asparagine 119 and 144–146 each bind NAD(+); that span reads ISN. Residues asparagine 146 and arginine 185 each coordinate substrate. The active-site Proton acceptor is the histidine 215. Methionine 266 lines the NAD(+) pocket.

It belongs to the LDH/MDH superfamily. MDH type 1 family. In terms of assembly, homodimer. Targeted for proteasomal degradation when cells are shifted to glucose-containing growth medium.

The protein localises to the cytoplasm. It catalyses the reaction (S)-malate + NAD(+) = oxaloacetate + NADH + H(+). Its function is as follows. The isoenzyme MDH2 may function primarily in the glyoxylate cycle. The protein is Malate dehydrogenase, cytoplasmic (MDH2) of Saccharomyces cerevisiae (strain ATCC 204508 / S288c) (Baker's yeast).